Here is a 307-residue protein sequence, read N- to C-terminus: MAGQSGRTFPRVAVLMGGASTEREVSLSSGHSCSAALRDAGYEVTEVDAGPDLARVLAELSPDAVFNALHGRWGEDGCVQGLLEWLRIPYTHSGVLASALAMDKARAKEVFAAAGLPVTQSVLATPEEVRARHILPPPYVVKPNAEGSSVGVYIVHEDANGPPQLAADMPQDLMVETYVPGRELTVTVMGDRVLAVTDILSDGWYDYDAKYRPGGSRHIVPADLPAEITEACHDIALRAHRALGCRGISRSDLRWDEARGLAGLILLETNTQPGMTPTSLSPEQAAHCGYSFPEFCAWLVEDASCSR.

The region spanning Lys108–Glu301 is the ATP-grasp domain. Leu135–Thr185 is a binding site for ATP. The Mg(2+) site is built by Asp252, Glu268, and Asn270.

It belongs to the D-alanine--D-alanine ligase family. It depends on Mg(2+) as a cofactor. The cofactor is Mn(2+).

The protein resides in the cytoplasm. The catalysed reaction is 2 D-alanine + ATP = D-alanyl-D-alanine + ADP + phosphate + H(+). It functions in the pathway cell wall biogenesis; peptidoglycan biosynthesis. In terms of biological role, cell wall formation. In Cereibacter sphaeroides (strain ATCC 17029 / ATH 2.4.9) (Rhodobacter sphaeroides), this protein is D-alanine--D-alanine ligase.